The primary structure comprises 842 residues: DNA mismatch repair protein MutS (842 aa).

596–603 (GPNMSGKS) contacts ATP.

Belongs to the DNA mismatch repair MutS family.

This protein is involved in the repair of mismatches in DNA. It is possible that it carries out the mismatch recognition step. This protein has a weak ATPase activity. This Exiguobacterium sp. (strain ATCC BAA-1283 / AT1b) protein is DNA mismatch repair protein MutS.